The chain runs to 244 residues: MAPEPSLTYLSQASSCNGATDNRKLVILDLNGTLLCRALAVRSEKSVYEASRNPIPRPGLHNFLKYIFANFSVMVFSSSKPHNVQAMLSAIMNEEQKKALIACWTRVDMKLTKHQFDRKVQTYKNLDTVWEKIHHDSTGKPVSWSQYNTIIVDDSKTKCAAHPYNHIAVSDFVAKSHSNIPKDIELACVIRYLKHLKSVPNVSYYIYKFPFKILADKSLEDNLKYLDELDENYKKECQVDNPQP.

The region spanning 19–196 is the FCP1 homology domain; sequence ATDNRKLVIL…ACVIRYLKHL (178 aa).

This is an uncharacterized protein from Schizosaccharomyces pombe (strain 972 / ATCC 24843) (Fission yeast).